Here is a 545-residue protein sequence, read N- to C-terminus: Tyrosine decarboxylase 2 (545 aa).

Residues 23-44 (GYTNGNGHTNGNGNYNGNGHVN) show a composition bias toward gly residues. Residues 23–45 (GYTNGNGHTNGNGNYNGNGHVNG) form a disordered region. Residues His-245 and His-360 each contribute to the L-tyrosine site. Lys-361 is modified (N6-(pyridoxal phosphate)lysine). Tyr-390 lines the L-tyrosine pocket.

The protein belongs to the group II decarboxylase family. As to quaternary structure, homotetramer. Pyridoxal 5'-phosphate is required as a cofactor. In terms of tissue distribution, expressed specifically in flowers.

It localises to the cytoplasm. It carries out the reaction L-tyrosine + H(+) = tyramine + CO2. Its function is as follows. Converts tyrosine into tyramine, a precursor of isoquinoline alkaloids and various amides. The polypeptide is Tyrosine decarboxylase 2 (Arabidopsis thaliana (Mouse-ear cress)).